We begin with the raw amino-acid sequence, 308 residues long: Glutaminase (308 aa).

The substrate site is built by Ser66, Asn117, Glu161, Asn168, Tyr192, Tyr244, and Val262.

The protein belongs to the glutaminase family. In terms of assembly, homotetramer.

It carries out the reaction L-glutamine + H2O = L-glutamate + NH4(+). The sequence is that of Glutaminase from Yersinia pestis bv. Antiqua (strain Nepal516).